The following is a 476-amino-acid chain: Ribulose bisphosphate carboxylase large chain (476 aa).

Asn124 and Thr174 together coordinate substrate. Lys176 serves as the catalytic Proton acceptor. Lys178 lines the substrate pocket. Positions 202, 204, and 205 each coordinate Mg(2+). Lys202 carries the N6-carboxylysine modification. The Proton acceptor role is filled by His295. Arg296, His328, and Ser380 together coordinate substrate.

This sequence belongs to the RuBisCO large chain family. Type I subfamily. Heterohexadecamer of 8 large chains and 8 small chains; disulfide-linked. The disulfide link is formed within the large subunit homodimers. Mg(2+) is required as a cofactor. Post-translationally, the disulfide bond which can form in the large chain dimeric partners within the hexadecamer appears to be associated with oxidative stress and protein turnover.

The protein localises to the carboxysome. It catalyses the reaction 2 (2R)-3-phosphoglycerate + 2 H(+) = D-ribulose 1,5-bisphosphate + CO2 + H2O. The enzyme catalyses D-ribulose 1,5-bisphosphate + O2 = 2-phosphoglycolate + (2R)-3-phosphoglycerate + 2 H(+). RuBisCO catalyzes two reactions: the carboxylation of D-ribulose 1,5-bisphosphate, the primary event in carbon dioxide fixation, as well as the oxidative fragmentation of the pentose substrate in the photorespiration process. Both reactions occur simultaneously and in competition at the same active site. This is Ribulose bisphosphate carboxylase large chain from Trichormus variabilis (strain ATCC 29413 / PCC 7937) (Anabaena variabilis).